The sequence spans 167 residues: Caltractin (167 aa).

Basic residues predominate over residues 1 to 18 (MSSARTVRKDKPRGRHHG). Positions 1 to 23 (MSSARTVRKDKPRGRHHGLTQQK) are disordered. EF-hand domains lie at 22–57 (QKRQ…LGFE), 58–93 (MTEE…KIGE), 95–130 (DTKE…LGEN), and 131–166 (FTVK…TSYA). Positions 35, 37, 39, 41, 46, 71, 73, 75, 82, 108, 110, 112, 114, 119, 144, 146, 148, 150, and 155 each coordinate Ca(2+).

This sequence belongs to the centrin family.

The protein resides in the cytoplasm. Its subcellular location is the cytoskeleton. It localises to the microtubule organizing center. Functionally, plays a fundamental role in microtubule-organizing center structure and function. This is Caltractin from Atriplex nummularia (Old man saltbush).